The sequence spans 295 residues: MSVSESHDIQLVIITGMSGAGKTVAIQSFEDLGYFCVDNLPPSLLPKFLELMKESNSKMSKVALVMDLRGREFFDRLIEALDEMAENPWITPRILFLDAKDSILVTRYKETRRSHPLAATGLPLEGIALERELLEELKGRSQIIYDTSDMKPRDLREKIVKHFATNQGETFTVNVMSFGFKYGIPIDADLVFDVRFLPNPYYIESMRPLTGKDKEVSSYVMKWNETQKFNEKLIDLLSFMLPSYKREGKSQVVIAIGCTGGQHRSVTLAENLADYFKKDYYTHVTHRDIEKRSRK.

Residue 16-23 (GMSGAGKT) participates in ATP binding. A GTP-binding site is contributed by 67 to 70 (DLRG).

The protein belongs to the RapZ-like family.

Displays ATPase and GTPase activities. Can also hydrolyze pNPP. May affect the expression of competence via the phosphorylation of a cellular component. The protein is Nucleotide-binding protein YvcJ (yvcJ) of Bacillus subtilis (strain 168).